The chain runs to 152 residues: MLRGAHAIALDTKGRLAVPTRYRDWLREECEGQLVCTIDIANPCLLLYPLCEWEEIEKKLKSLSGMNPVERRLQRLLLGYASECELDGNGRLLLSAPLRQHAGLDKQVMLVGQLNKFEIWSETRWLQQVDEDIQALPEMDWTISDKLRDFSL.

SpoVT-AbrB domains are found at residues 5-52 (AHAI…PLCE) and 81-124 (ASEC…SETR).

It belongs to the MraZ family. In terms of assembly, forms oligomers.

Its subcellular location is the cytoplasm. The protein resides in the nucleoid. The sequence is that of Transcriptional regulator MraZ from Tolumonas auensis (strain DSM 9187 / NBRC 110442 / TA 4).